The chain runs to 361 residues: Glyceraldehyde-3-phosphate dehydrogenase, glycosomal (361 aa).

Residues 13–14 (RI), aspartate 39, and arginine 93 contribute to the NAD(+) site. Residues 166–168 (SCT), threonine 198, 227–228 (TG), and arginine 250 contribute to the D-glyceraldehyde 3-phosphate site. The active-site Nucleophile is cysteine 167. Position 336 (asparagine 336) interacts with NAD(+). The Microbody targeting signal motif lies at 359–361 (SKL).

Belongs to the glyceraldehyde-3-phosphate dehydrogenase family. As to quaternary structure, homotetramer.

It is found in the glycosome. It carries out the reaction D-glyceraldehyde 3-phosphate + phosphate + NAD(+) = (2R)-3-phospho-glyceroyl phosphate + NADH + H(+). Its pathway is carbohydrate degradation; glycolysis; pyruvate from D-glyceraldehyde 3-phosphate: step 1/5. The chain is Glyceraldehyde-3-phosphate dehydrogenase, glycosomal (GAPDG) from Crithidia fasciculata.